Reading from the N-terminus, the 532-residue chain is Cytokinin dehydrogenase 1 (532 aa).

Residues 1 to 17 (MAAIYLLIAALIASSHA) form the signal peptide. Asparagine 52 and asparagine 63 each carry an N-linked (GlcNAc...) asparagine glycan. Residues 65-244 (TAALPAAVLF…TRARVAVEPA (180 aa)) form the FAD-binding PCMH-type domain. The FAD site is built by phenylalanine 100, glycine 102, arginine 103, and glycine 104. Histidine 105 is subject to Pros-8alpha-FAD histidine. FAD-binding residues include serine 106 and glutamine 110. Asparagine 133 carries an N-linked (GlcNAc...) asparagine glycan. Residues aspartate 168, threonine 173, serine 179, valine 183, and isoleucine 234 each coordinate FAD. N-linked (GlcNAc...) asparagine glycosylation is found at asparagine 321 and asparagine 432. Residues tyrosine 490, serine 525, and glutamine 528 each contribute to the FAD site.

This sequence belongs to the oxygen-dependent FAD-linked oxidoreductase family. In terms of assembly, monomer. The cofactor is FAD.

It is found in the secreted. Its subcellular location is the extracellular space. The catalysed reaction is N(6)-dimethylallyladenine + A + H2O = 3-methyl-2-butenal + adenine + AH2. Its function is as follows. Catalyzes the oxidation of cytokinins, a family of N(6)-substituted adenine derivatives that are plant hormones, where the substituent is an isopentenyl group. The sequence is that of Cytokinin dehydrogenase 1 (CKX1) from Oryza sativa subsp. japonica (Rice).